The primary structure comprises 798 residues: MSNAINQNGTGLEQQVAGLDLNGGSADYSGPITSKTSTNSVTGGVYVPPHLRGGGGNNNAADAESQGQGQGQGQGFDSRSGNPRQETRDPQQSRGGGGEYRRGGGGGGRGFNRQSGDYGYGSGGGGRRGGGGRFEDNYNGGEFDSRRGGDWNRSGGGGGGGRGFGRGPSYRGGGGGSGSNLNEQTAEDGQAQQQQQPRNDRWQEPERPAGFDGSEGGQSAGGNRSYNNRGERGGGGYNSRWKEGGGSNVDYTKLGARDERLEVELFGVGNTGINFDKYEDIPVEATGQNVPPNITSFDDVQLTEIIRNNVALARYDKPTPVQKHAIPIIINGRDLMACAQTGSGKTAAFLVPILNQMYELGHVPPPQSTRQYSRRKQYPLGLVLAPTRELATQIFEEAKKFAYRSRMRPAVLYGGNNTSEQMRELDRGCHLIVATPGRLEDMITRGKVGLENIRFLVLDEADRMLDMGFEPQIRRIVEQLNMPPTGQRQTLMFSATFPKQIQELASDFLSNYIFLAVGRVGSTSENITQTILWVYEPDKRSYLLDLLSSIRDGPEYTKDSLTLIFVETKKGADSLEEFLYQCNHPVTSIHGDRTQKEREEALRCFRSGDCPILVATAVAARGLDIPHVKHVINFDLPSDVEEYVHRIGRTGRMGNLGVATSFFNEKNRNICSDLLELLIETKQEIPSFMEDMSSDRGHGGAKRAGRGGGGRYGGGFGSRDYRQSSGGGGGGRSGPPPRSGGSGSGGGGGSYRSNGNSYGGNSGGGGYYGGGAGGGSYGGSYGGGSASHSSNAPDWWAQ.

A disordered region spans residues 16–248; sequence VAGLDLNGGS…SRWKEGGGSN (233 aa). Positions 31-42 are enriched in polar residues; that stretch reads PITSKTSTNSVT. Composition is skewed to gly residues over residues 94–110, 118–132, and 154–178; these read RGGG…GGRG, YGYG…GGGG, and SGGG…GGSG. A phosphoserine mark is found at Ser-177 and Ser-179. A compositionally biased stretch (basic and acidic residues) spans 198-209; sequence RNDRWQEPERPA. Residues Ser-214 and Ser-219 each carry the phosphoserine modification. Residues 295-323 carry the Q motif motif; sequence TSFDDVQLTEIIRNNVALARYDKPTPVQK. ATP is bound by residues 315–322 and 339–346; these read YDKPTPVQ and AQTGSGKT. Residues 326-515 form the Helicase ATP-binding domain; that stretch reads IPIIINGRDL…SDFLSNYIFL (190 aa). Positions 459–462 match the DEAD box motif; the sequence is DEAD. The Helicase C-terminal domain maps to 542 to 693; the sequence is YLLDLLSSIR…EIPSFMEDMS (152 aa). Residue Ser-638 is modified to Phosphoserine. 2 disordered regions span residues 689-765 and 778-798; these read MEDM…SGGG and GGSY…WWAQ. Gly residues-rich tracts occupy residues 706–717 and 740–750; these read RGGGGRYGGGFG and GGSGSGGGGGS.

It belongs to the DEAD box helicase family. DDX3/DED1 subfamily. In terms of tissue distribution, vas and bel colocalize in nuage (perinuclear, electron-dense granules in germline cells) and at the oocyte posterior during oogenesis.

It localises to the cytoplasm. It catalyses the reaction ATP + H2O = ADP + phosphate + H(+). In terms of biological role, ATP-dependent RNA helicase that is essential and required for cellular function, larval growth, and for male and female fertility. Also required for RNA interference (RNAi), double-stranded RNA induces potent and specific gene silencing, by acting downstream of dsRNA internalization. RNAi is mediated by the RNA-induced silencing complex (RISC), a sequence-specific, multicomponent nuclease that destroys or silences messenger RNAs homologous to the silencing trigger. The protein is ATP-dependent RNA helicase bel of Drosophila melanogaster (Fruit fly).